The primary structure comprises 541 residues: Membrane protein insertase YidC (541 aa).

The next 5 helical transmembrane spans lie at 6–26, 349–369, 420–440, 457–477, and 500–520; these read NILL…WQAD, FVGN…GLLF, GGCL…WVLL, LSVQ…MFVM, and MIFT…WLVG.

The protein belongs to the OXA1/ALB3/YidC family. Type 1 subfamily. As to quaternary structure, interacts with the Sec translocase complex via SecD. Specifically interacts with transmembrane segments of nascent integral membrane proteins during membrane integration.

The protein localises to the cell inner membrane. Required for the insertion and/or proper folding and/or complex formation of integral membrane proteins into the membrane. Involved in integration of membrane proteins that insert both dependently and independently of the Sec translocase complex, as well as at least some lipoproteins. Aids folding of multispanning membrane proteins. The polypeptide is Membrane protein insertase YidC (Shewanella sp. (strain ANA-3)).